The sequence spans 445 residues: Phosphoglucosamine mutase (445 aa).

Ser-102 functions as the Phosphoserine intermediate in the catalytic mechanism. Residues Ser-102, Asp-241, Asp-243, and Asp-245 each coordinate Mg(2+). At Ser-102 the chain carries Phosphoserine.

The protein belongs to the phosphohexose mutase family. Mg(2+) serves as cofactor. Activated by phosphorylation.

It carries out the reaction alpha-D-glucosamine 1-phosphate = D-glucosamine 6-phosphate. Functionally, catalyzes the conversion of glucosamine-6-phosphate to glucosamine-1-phosphate. This is Phosphoglucosamine mutase from Shewanella halifaxensis (strain HAW-EB4).